The chain runs to 139 residues: Actin-depolymerizing factor (139 aa).

One can recognise an ADF-H domain in the interval 5 to 139; sequence SSGMAVDDEC…SMDIIKARAF (135 aa).

This sequence belongs to the actin-binding proteins ADF family. Preferentially in mature anther.

Functionally, actin-depolymerizing protein. Severs actin filaments (F-actin) and binds to actin monomers. The polypeptide is Actin-depolymerizing factor (Lilium longiflorum (Trumpet lily)).